A 686-amino-acid polypeptide reads, in one-letter code: Methionine--tRNA ligase (686 aa).

Residues 15–25 carry the 'HIGH' region motif; the sequence is PYANGSIHLGH. Zn(2+) is bound by residues Cys146, Cys149, Cys159, and Cys162. The short motif at 332–336 is the 'KMSKS' region element; it reads KMSKS. Lys335 serves as a coordination point for ATP. The segment at 550-571 is disordered; sequence AAAEAAAKEKAEAEKEQASQTE. Residues 585-686 enclose the tRNA-binding domain; the sequence is AFSAVDMRIA…EGAQPGMRVM (102 aa).

The protein belongs to the class-I aminoacyl-tRNA synthetase family. MetG type 1 subfamily. In terms of assembly, homodimer. Zn(2+) is required as a cofactor.

It localises to the cytoplasm. The enzyme catalyses tRNA(Met) + L-methionine + ATP = L-methionyl-tRNA(Met) + AMP + diphosphate. In terms of biological role, is required not only for elongation of protein synthesis but also for the initiation of all mRNA translation through initiator tRNA(fMet) aminoacylation. This is Methionine--tRNA ligase from Vibrio atlanticus (strain LGP32) (Vibrio splendidus (strain Mel32)).